A 159-amino-acid polypeptide reads, in one-letter code: Transcription antitermination protein NusB (159 aa).

The disordered stretch occupies residues 1-20 (MNKNTQGKPSGKPVRRDGVD).

Belongs to the NusB family.

Functionally, involved in transcription antitermination. Required for transcription of ribosomal RNA (rRNA) genes. Binds specifically to the boxA antiterminator sequence of the ribosomal RNA (rrn) operons. The sequence is that of Transcription antitermination protein NusB from Stenotrophomonas maltophilia (strain R551-3).